Here is a 248-residue protein sequence, read N- to C-terminus: PF03932 family protein CutC (248 aa).

The protein belongs to the CutC family.

The protein resides in the cytoplasm. This Citrobacter koseri (strain ATCC BAA-895 / CDC 4225-83 / SGSC4696) protein is PF03932 family protein CutC.